The primary structure comprises 505 residues: Deoxyguanosinetriphosphate triphosphohydrolase (505 aa).

An HD domain is found at 66–273 (RLTHSMEVQQ…MEAADDISYC (208 aa)).

It belongs to the dGTPase family. Type 1 subfamily. In terms of assembly, homotetramer. Requires Mg(2+) as cofactor.

The enzyme catalyses dGTP + H2O = 2'-deoxyguanosine + triphosphate + H(+). DGTPase preferentially hydrolyzes dGTP over the other canonical NTPs. In Escherichia coli O17:K52:H18 (strain UMN026 / ExPEC), this protein is Deoxyguanosinetriphosphate triphosphohydrolase.